Reading from the N-terminus, the 860-residue chain is Leucine--tRNA ligase (860 aa).

The 'HIGH' region signature appears at 42-52; sequence PYPSGRLHMGH. The 'KMSKS' region signature appears at 619–623; that stretch reads KMSKS. Lys622 contributes to the ATP binding site.

This sequence belongs to the class-I aminoacyl-tRNA synthetase family.

It localises to the cytoplasm. The catalysed reaction is tRNA(Leu) + L-leucine + ATP = L-leucyl-tRNA(Leu) + AMP + diphosphate. This chain is Leucine--tRNA ligase, found in Escherichia coli (strain SMS-3-5 / SECEC).